A 360-amino-acid chain; its full sequence is Peptide chain release factor 1 (360 aa).

Glutamine 235 is subject to N5-methylglutamine.

Belongs to the prokaryotic/mitochondrial release factor family. Post-translationally, methylated by PrmC. Methylation increases the termination efficiency of RF1.

Its subcellular location is the cytoplasm. In terms of biological role, peptide chain release factor 1 directs the termination of translation in response to the peptide chain termination codons UAG and UAA. The polypeptide is Peptide chain release factor 1 (Methylobacillus flagellatus (strain ATCC 51484 / DSM 6875 / VKM B-1610 / KT)).